We begin with the raw amino-acid sequence, 307 residues long: Nodulation protein NoeC (307 aa).

Helical transmembrane passes span 46–66 (APLWLAFMTFCSVASGIYVLN), 91–111 (SGLTGVWMCLVLIALGGVCAI), 117–137 (LFAITASYVALSVIYVGKVRG), 140–160 (VLDLFVLSALYTTRILAGATA), 163–183 (IPVPASFLAFSAMAFVSLASI), 212–232 (IVALICVSAGYAAVVFLELFV), 238–258 (AQGPAPIFVSNAMCVVVAYWI), and 279–299 (VTDGSSLVCILGLALGLVFLM).

It localises to the cell membrane. The protein is Nodulation protein NoeC (noeC) of Azorhizobium caulinodans (strain ATCC 43989 / DSM 5975 / JCM 20966 / LMG 6465 / NBRC 14845 / NCIMB 13405 / ORS 571).